Consider the following 690-residue polypeptide: UvrABC system protein B (690 aa).

A Helicase ATP-binding domain is found at 30-188 (QGVMDGQTNQ…QELISLHFVR (159 aa)). 43 to 50 (GVTGSGKT) is a binding site for ATP. The short motif at 96-119 (YYDFYQPEAYIPTMDKYIAKDLKI) is the Beta-hairpin element. The region spanning 435–601 (QIDDLLEEIR…SIVKSVDQVL (167 aa)) is the Helicase C-terminal domain. A UVR domain is found at 641 to 676 (YAMAEELRLEMQEAAESMEFEKAAYLRDEVTKLEDA).

It belongs to the UvrB family. Forms a heterotetramer with UvrA during the search for lesions. Interacts with UvrC in an incision complex.

The protein localises to the cytoplasm. In terms of biological role, the UvrABC repair system catalyzes the recognition and processing of DNA lesions. A damage recognition complex composed of 2 UvrA and 2 UvrB subunits scans DNA for abnormalities. Upon binding of the UvrA(2)B(2) complex to a putative damaged site, the DNA wraps around one UvrB monomer. DNA wrap is dependent on ATP binding by UvrB and probably causes local melting of the DNA helix, facilitating insertion of UvrB beta-hairpin between the DNA strands. Then UvrB probes one DNA strand for the presence of a lesion. If a lesion is found the UvrA subunits dissociate and the UvrB-DNA preincision complex is formed. This complex is subsequently bound by UvrC and the second UvrB is released. If no lesion is found, the DNA wraps around the other UvrB subunit that will check the other stand for damage. The polypeptide is UvrABC system protein B (Chlorobium phaeobacteroides (strain BS1)).